Consider the following 119-residue polypeptide: Beta-2-microglobulin (119 aa).

Residues 1-20 form the signal peptide; it reads MARTVATFFLMLVSLACLDA. Positions 25–114 constitute an Ig-like C1-type domain; it reads PQVQVYTRHP…VTLKEPKVVT (90 aa). C45 and C100 form a disulfide bridge.

Belongs to the beta-2-microglobulin family. Heterodimer of an alpha chain and a beta chain. Beta-2-microglobulin is the beta-chain of major histocompatibility complex class I molecules.

The protein resides in the secreted. In terms of biological role, component of the class I major histocompatibility complex (MHC). Involved in the presentation of peptide antigens to the immune system. In Sigmodon hispidus (Hispid cotton rat), this protein is Beta-2-microglobulin (B2M).